Consider the following 430-residue polypeptide: UDP-glucuronate 4-epimerase 3 (430 aa).

2 helical membrane passes run Ser29–Tyr49 and Gly90–Leu110. Ser92–Phe123 is an NAD(+) binding site. Tyr242 serves as the catalytic Proton acceptor.

The protein belongs to the NAD(P)-dependent epimerase/dehydratase family. In terms of assembly, homodimer. As to expression, in roots, leaves, siliques, flowers, pollen and stems.

It is found in the golgi apparatus. The protein localises to the golgi stack membrane. The enzyme catalyses UDP-alpha-D-glucuronate = UDP-alpha-D-galacturonate. Its function is as follows. Involved in the synthesis of the negatively charged monosaccharide that forms the backbone of pectic cell wall components. The sequence is that of UDP-glucuronate 4-epimerase 3 (GAE3) from Arabidopsis thaliana (Mouse-ear cress).